The primary structure comprises 651 residues: Acid beta-fructofuranosidase (651 aa).

Residues 1–23 lie on the Cytoplasmic side of the membrane; sequence MEHHKPLLPTSSHAAPNPRTRKD. Positions 1–103 are cleaved as a propeptide — removed in mature form; that stretch reads MEHHKPLLPT…LFSGEGGASE (103 aa). A helical; Signal-anchor for type II membrane protein transmembrane segment spans residues 24–44; it reads LLLLLCALLFLSSLVAFGRNR. Residues 45-651 are Lumenal-facing; sequence ASNVPHDHVS…PFPFNPDQKN (607 aa). Residues 48 to 76 are disordered; sequence VPHDHVSSSASNHQQEHQSPTSLPSSKWH. A compositionally biased stretch (polar residues) spans 54-72; sequence SSSASNHQQEHQSPTSLPS. Substrate contacts are provided by residues 127 to 130, Gln146, Trp154, and 189 to 190; these read WMND and WT. Residue Asp130 is part of the active site. N-linked (GlcNAc...) asparagine glycosylation is present at Asn210. Residue 253–254 coordinates substrate; that stretch reads RD. N-linked (GlcNAc...) asparagine glycosylation is present at Asn275. Glu308 and Asp343 together coordinate substrate. Residues Cys500 and Cys548 are joined by a disulfide bond. N-linked (GlcNAc...) asparagine glycosylation occurs at Asn620.

This sequence belongs to the glycosyl hydrolase 32 family. May be present in two forms, a 70 kDa monomer and a heterodimer of the 30 kDa and 38 kDa subunits. The ratio of the levels of the two forms within cells appears to be regulated developmentally.

Its subcellular location is the membrane. The protein localises to the vacuole lumen. The catalysed reaction is Hydrolysis of terminal non-reducing beta-D-fructofuranoside residues in beta-D-fructofuranosides.. Its pathway is glycan biosynthesis; sucrose metabolism. The polypeptide is Acid beta-fructofuranosidase (Phaseolus vulgaris (Kidney bean)).